A 2157-amino-acid polypeptide reads, in one-letter code: Genome polyprotein (2157 aa).

Gly2 is lipidated: N-myristoyl glycine; by host. Residues 2–1470 (GAQVSRQNVG…DLSIANSIIT (1469 aa)) are Cytoplasmic-facing. The tract at residues 567–584 (PIEQNPVENYIDEVLNEV) is amphipathic alpha-helix. Active-site for protease 2A activity residues include His875 and Asp892. Residues Cys909 and Cys911 each contribute to the Zn(2+) site. The active-site For protease 2A activity is Cys963. Positions 969 and 971 each coordinate Zn(2+). Positions 1095 to 1164 (SDSWLKKFTE…NLRAADNATQ (70 aa)) are membrane-binding. An oligomerization region spans residues 1095–1228 (SDSWLKKFTE…PPGTGKSITT (134 aa)). Residues 1116–1120 (GNKIS) are RNA-binding. Residues 1188 to 1350 (EAKRIKVLYN…YKDAQGKLNV (163 aa)) form the SF3 helicase domain. Residues Cys1357, Cys1368, and Cys1373 each contribute to the Zn(2+) site. The C4-type; degenerate zinc-finger motif lies at 1357-1373 (CNVNTKIGNAKCCPFVC). Residues 1400-1407 (EDKRRRQV) are RNA-binding. The interval 1411–1416 (MSAIFQ) is oligomerization. The stretch at 1471–1486 (IIANIISIAGIIFVIY) is an intramembrane region. The Cytoplasmic portion of the chain corresponds to 1487–2157 (KLFCTLQGPY…LLKHEWYEKF (671 aa)). Position 1496 is an O-(5'-phospho-RNA)-tyrosine (Tyr1496). Residues 1515–1693 (GPEEEFGRSI…FSAMLLRSYF (179 aa)) enclose the Peptidase C3 domain. Catalysis depends on for protease 3C activity residues His1554, Glu1585, and Cys1661. Residues 1925–2038 (DCIMAFDYTN…SYKYTLDMEA (114 aa)) form the RdRp catalytic domain. The Mg(2+) site is built by Asp1931 and Asp2024.

It belongs to the picornaviruses polyprotein family. In terms of assembly, interacts with capsid protein VP1 and capsid protein VP3 to form heterotrimeric protomers. As to quaternary structure, interacts with capsid protein VP0, and capsid protein VP3 to form heterotrimeric protomers. Five protomers subsequently associate to form pentamers which serve as building blocks for the capsid. Interacts with capsid protein VP2, capsid protein VP3 and capsid protein VP4 following cleavage of capsid protein VP0. Interacts with capsid protein VP1 and capsid protein VP3 in the mature capsid. In terms of assembly, interacts with capsid protein VP0 and capsid protein VP1 to form heterotrimeric protomers. Five protomers subsequently associate to form pentamers which serve as building blocks for the capsid. Interacts with capsid protein VP4 in the mature capsid. Interacts with protein 2C; this interaction may be important for virion morphogenesis. As to quaternary structure, interacts with capsid protein VP1 and capsid protein VP3. Homodimer. In terms of assembly, homohexamer; forms a hexameric ring structure with 6-fold symmetry characteristic of AAA+ ATPases. Interacts (via N-terminus) with host RTN3 (via reticulon domain); this interaction is important for viral replication. Interacts with capsid protein VP3; this interaction may be important for virion morphogenesis. As to quaternary structure, interacts with protein 3CD. Homodimer. Interacts with host GBF1. Interacts (via GOLD domain) with host ACBD3 (via GOLD domain); this interaction allows the formation of a viral protein 3A/ACBD3 heterotetramer with a 2:2 stoichiometry, which will stimulate the recruitment of host PI4KB in order to synthesize PI4P at the viral RNA replication sites. In terms of assembly, interacts with RNA-directed RNA polymerase. As to quaternary structure, interacts with protein 3AB and with RNA-directed RNA polymerase. Interacts with Viral protein genome-linked and with protein 3CD. Mg(2+) serves as cofactor. In terms of processing, specific enzymatic cleavages in vivo by the viral proteases yield processing intermediates and the mature proteins. Post-translationally, myristoylation is required for the formation of pentamers during virus assembly. Further assembly of 12 pentamers and a molecule of genomic RNA generates the provirion. During virion maturation, immature virions are rendered infectious following cleavage of VP0 into VP4 and VP2. This maturation seems to be an autocatalytic event triggered by the presence of RNA in the capsid and it is followed by a conformational change infectious virion. In terms of processing, myristoylation is required during RNA encapsidation and formation of the mature virus particle. Post-translationally, VPg is uridylylated by the polymerase into VPg-pUpU. This acts as a nucleotide-peptide primer for the genomic RNA replication.

It is found in the virion. Its subcellular location is the host cytoplasm. The protein localises to the host cytoplasmic vesicle membrane. The protein resides in the host nucleus. It catalyses the reaction a ribonucleoside 5'-triphosphate + H2O = a ribonucleoside 5'-diphosphate + phosphate + H(+). The catalysed reaction is Selective cleavage of Tyr-|-Gly bond in the picornavirus polyprotein.. It carries out the reaction RNA(n) + a ribonucleoside 5'-triphosphate = RNA(n+1) + diphosphate. The enzyme catalyses Selective cleavage of Gln-|-Gly bond in the poliovirus polyprotein. In other picornavirus reactions Glu may be substituted for Gln, and Ser or Thr for Gly.. Its activity is regulated as follows. Replication or transcription is subject to high level of random mutations by the nucleotide analog ribavirin. Forms an icosahedral capsid of pseudo T=3 symmetry with capsid proteins VP2 and VP3. The capsid is 300 Angstroms in diameter, composed of 60 copies of each capsid protein and enclosing the viral positive strand RNA genome. Capsid protein VP1 mainly forms the vertices of the capsid. Capsid protein VP1 interacts with host cell receptor to provide virion attachment to target host cells. This attachment induces virion internalization. Tyrosine kinases are probably involved in the entry process. After binding to its receptor, the capsid undergoes conformational changes. Capsid protein VP1 N-terminus (that contains an amphipathic alpha-helix) and capsid protein VP4 are externalized. Together, they shape a pore in the host membrane through which viral genome is translocated to host cell cytoplasm. Functionally, forms an icosahedral capsid of pseudo T=3 symmetry with capsid proteins VP2 and VP3. The capsid is 300 Angstroms in diameter, composed of 60 copies of each capsid protein and enclosing the viral positive strand RNA genome. In terms of biological role, lies on the inner surface of the capsid shell. After binding to the host receptor, the capsid undergoes conformational changes. Capsid protein VP4 is released, Capsid protein VP1 N-terminus is externalized, and together, they shape a pore in the host membrane through which the viral genome is translocated into the host cell cytoplasm. Its function is as follows. Component of immature procapsids, which is cleaved into capsid proteins VP4 and VP2 after maturation. Allows the capsid to remain inactive before the maturation step. Cysteine protease that cleaves viral polyprotein and specific host proteins. It is responsible for the autocatalytic cleavage between the P1 and P2 regions, which is the first cleavage occurring in the polyprotein. Also cleaves the host translation initiation factor EIF4G1, in order to shut down the capped cellular mRNA translation. Inhibits the host nucleus-cytoplasm protein and RNA trafficking by cleaving host members of the nuclear pores. Counteracts stress granule formation probably by antagonizing its assembly or promoting its dissassembly. Functionally, plays an essential role in the virus replication cycle by acting as a viroporin. Creates a pore in the host endoplasmic reticulum and as a consequence releases Ca2+ in the cytoplasm of infected cell. In turn, high levels of cytoplasmic calcium may trigger membrane trafficking and transport of viral ER-associated proteins to viroplasms, sites of viral genome replication. In terms of biological role, induces and associates with structural rearrangements of intracellular membranes. Displays RNA-binding, nucleotide binding and NTPase activities. May play a role in virion morphogenesis and viral RNA encapsidation by interacting with the capsid protein VP3. Its function is as follows. Localizes the viral replication complex to the surface of membranous vesicles. Together with protein 3CD binds the Cis-Active RNA Element (CRE) which is involved in RNA synthesis initiation. Acts as a cofactor to stimulate the activity of 3D polymerase, maybe through a nucleid acid chaperone activity. Localizes the viral replication complex to the surface of membranous vesicles. It inhibits host cell endoplasmic reticulum-to-Golgi apparatus transport and causes the disassembly of the Golgi complex, possibly through GBF1 interaction. This would result in depletion of MHC, trail receptors and IFN receptors at the host cell surface. Plays an essential role in viral RNA replication by recruiting ACBD3 and PI4KB at the viral replication sites, thereby allowing the formation of the rearranged membranous structures where viral replication takes place. Functionally, acts as a primer for viral RNA replication and remains covalently bound to viral genomic RNA. VPg is uridylylated prior to priming replication into VPg-pUpU. The oriI viral genomic sequence may act as a template for this. The VPg-pUpU is then used as primer on the genomic RNA poly(A) by the RNA-dependent RNA polymerase to replicate the viral genome. During genome replication, the VPg-RNA linkage is removed by the host TDP2, thereby accelerating replication. During the late stage of the replication cycle, host TDP2 is excluded from sites of viral RNA synthesis and encapsidation, allowing for the generation of progeny virions. In terms of biological role, involved in the viral replication complex and viral polypeptide maturation. It exhibits protease activity with a specificity and catalytic efficiency that is different from protease 3C. Protein 3CD lacks polymerase activity. Protein 3CD binds to the 5'UTR of the viral genome. Its function is as follows. Replicates the viral genomic RNA on the surface of intracellular membranes. May form linear arrays of subunits that propagate along a strong head-to-tail interaction called interface-I. Covalently attaches UMP to a tyrosine of VPg, which is used to prime RNA synthesis. The positive stranded RNA genome is first replicated at virus induced membranous vesicles, creating a dsRNA genomic replication form. This dsRNA is then used as template to synthesize positive stranded RNA genomes. ss(+)RNA genomes are either translated, replicated or encapsidated. Major viral protease that mediates proteolytic processing of the polyprotein. Cleaves host EIF5B, contributing to host translation shutoff. Also cleaves host PABPC1, contributing to host translation shutoff. Cleaves host NLRP1, triggers host N-glycine-mediated degradation of the autoinhibitory NLRP1 N-terminal fragment. The polypeptide is Genome polyprotein (Homo sapiens (Human)).